Consider the following 2540-residue polypeptide: Probable JmjC domain-containing histone demethylation protein 2C (2540 aa).

Positions 278-309 (TRAQANSPRPAMNSQAAVPKQNTHQQQQQRSI) are enriched in polar residues. The disordered stretch occupies residues 278–478 (TRAQANSPRP…TVSDHNSNDL (201 aa)). Residues Ser317 and Ser320 each carry the phosphoserine modification. The span at 323–342 (DEEKMKEEKYDYISRGENPK) shows a compositional bias: basic and acidic residues. The span at 343–353 (GKNKHLMNKRR) shows a compositional bias: basic residues. A compositionally biased stretch (basic and acidic residues) spans 354-371 (KPEEDEKKLNMKRLRTDN). Phosphoserine is present on residues Ser373 and Ser376. Positions 373–382 (SDFSESSDSE) are enriched in low complexity. Basic and acidic residues-rich tracts occupy residues 383-403 (NSNKRIIDNSSEQKPENELKN), 410-427 (NGEEGKPHNNEKAGEETL), and 438-452 (QEDKKHEEAEKRKSV). Residues 464–478 (SSEQSTVSDHNSNDL) are compositionally biased toward polar residues. Ser475 and Ser501 each carry phosphoserine. At Thr505 the chain carries Phosphothreonine. A phosphoserine mark is found at Ser601, Ser617, Ser638, Ser639, Ser641, Ser652, and Ser943. Residues 631 to 656 (VDTHKIKSSPSPEVVKPKITHSPDSV) form a disordered region. 2 disordered regions span residues 1242-1263 (GKVQESQKPPTLIPEPKDSQAN) and 1614-1692 (NRRK…NSNT). Over residues 1643 to 1652 (KRQPKPTYKK) the composition is skewed to basic residues. Residues 1653–1669 (KQNDLQKRKGEIEEDLK) show a composition bias toward basic and acidic residues. A C6-type zinc finger spans residues 1846–1871 (CDACEATLFNIHWVCQKCGFVVCLDC). Residues 1971–1991 (PESQQQNTPPKSEKNGGSSPE) show a composition bias toward polar residues. Residues 1971–2064 (PESQQQNTPP…LVSQNNEQGS (94 aa)) form a disordered region. Residue Ser1989 is modified to Phosphoserine. Basic and acidic residues predominate over residues 2016 to 2043 (AEQKAREEKKENKELTLENQIKEEREQD). Residues 2045 to 2064 (SESPNGRTSPLVSQNNEQGS) show a composition bias toward polar residues. Positions 2066 to 2070 (LRDLL) match the LXXLL motif motif. Residues Lys2132 and Lys2136 each participate in a glycyl lysine isopeptide (Lys-Gly) (interchain with G-Cter in SUMO2) cross-link. The JmjC domain occupies 2274 to 2498 (MPARYEDLLK…ESFHLTQELR (225 aa)). Fe cation contacts are provided by His2336, Glu2338, and His2466.

Belongs to the JHDM2 histone demethylase family. In terms of assembly, interacts specifically with the ligand-binding domain of the thyroid receptor (TR). Requires the presence of thyroid hormone for its interaction. Requires Fe(2+) as cofactor.

Its subcellular location is the nucleus. Functionally, probable histone demethylase that specifically demethylates 'Lys-9' of histone H3, thereby playing a central role in histone code. Demethylation of Lys residue generates formaldehyde and succinate. May be involved in hormone-dependent transcriptional activation, by participating in recruitment to androgen-receptor target genes. This Homo sapiens (Human) protein is Probable JmjC domain-containing histone demethylation protein 2C (JMJD1C).